The sequence spans 338 residues: Tryptophan--tRNA ligase (338 aa).

ATP is bound by residues glutamine 11–serine 13 and glycine 19–asparagine 20. Positions proline 12–asparagine 20 match the 'HIGH' region motif. An L-tryptophan-binding site is contributed by aspartate 135. Residues glycine 147–aspartate 149, valine 189, and lysine 198–serine 202 contribute to the ATP site. Residues lysine 198–serine 202 carry the 'KMSKS' region motif.

This sequence belongs to the class-I aminoacyl-tRNA synthetase family. As to quaternary structure, homodimer.

It is found in the cytoplasm. The enzyme catalyses tRNA(Trp) + L-tryptophan + ATP = L-tryptophyl-tRNA(Trp) + AMP + diphosphate + H(+). Catalyzes the attachment of tryptophan to tRNA(Trp). This is Tryptophan--tRNA ligase from Vibrio vulnificus (strain YJ016).